We begin with the raw amino-acid sequence, 310 residues long: tRNA dimethylallyltransferase (310 aa).

An ATP-binding site is contributed by 10–17 (GPTAVGKS). Position 12-17 (12-17 (TAVGKS)) interacts with substrate. Interaction with substrate tRNA stretches follow at residues 35–38 (DSAQ), 159–163 (QRIQR), and 274–281 (KRQITWLR).

It belongs to the IPP transferase family. In terms of assembly, monomer. Mg(2+) is required as a cofactor.

The catalysed reaction is adenosine(37) in tRNA + dimethylallyl diphosphate = N(6)-dimethylallyladenosine(37) in tRNA + diphosphate. In terms of biological role, catalyzes the transfer of a dimethylallyl group onto the adenine at position 37 in tRNAs that read codons beginning with uridine, leading to the formation of N6-(dimethylallyl)adenosine (i(6)A). This chain is tRNA dimethylallyltransferase, found in Halorhodospira halophila (strain DSM 244 / SL1) (Ectothiorhodospira halophila (strain DSM 244 / SL1)).